An 81-amino-acid chain; its full sequence is Photosystem I iron-sulfur center (81 aa).

4Fe-4S ferredoxin-type domains follow at residues 2-31 (SHTV…MVPW) and 39-68 (VASS…IRVY). 8 residues coordinate [4Fe-4S] cluster: cysteine 11, cysteine 14, cysteine 17, cysteine 21, cysteine 48, cysteine 51, cysteine 54, and cysteine 58.

In terms of assembly, the cyanobacterial PSI reaction center is composed of one copy each of PsaA,B,C,D,E,F,I,J,K,L,M and X, and forms trimeric complexes. The cofactor is [4Fe-4S] cluster.

It localises to the cellular thylakoid membrane. It catalyses the reaction reduced [plastocyanin] + hnu + oxidized [2Fe-2S]-[ferredoxin] = oxidized [plastocyanin] + reduced [2Fe-2S]-[ferredoxin]. Its function is as follows. Apoprotein for the two 4Fe-4S centers FA and FB of photosystem I (PSI); essential for photochemical activity. FB is the terminal electron acceptor of PSI, donating electrons to ferredoxin. The C-terminus interacts with PsaA/B/D and helps assemble the protein into the PSI complex. Required for binding of PsaD and PsaE to PSI. PSI is a plastocyanin/cytochrome c6-ferredoxin oxidoreductase, converting photonic excitation into a charge separation, which transfers an electron from the donor P700 chlorophyll pair to the spectroscopically characterized acceptors A0, A1, FX, FA and FB in turn. The chain is Photosystem I iron-sulfur center from Trichormus variabilis (strain ATCC 29413 / PCC 7937) (Anabaena variabilis).